The sequence spans 443 residues: MFLAQEIIRKKRNAEVLSTEEIQFFVNGITNNTVSEGQIAAFGMAVYFNDMNMDERIALTTAMRDSGTVLDWKSLDLNGPIIDKHSTGGVGDVISLMLGPMAAACGGYVPMISGRGLGHTGGTLDKFDAIPGYNTEPDSALFRKVVKEAGVAIIGQTGDLVPADKRFYSIRDNTATVESISLITASILSKKLAAGLDALAMDVKVGTGAFMPTYELSEELARSITAVANGAGTKTTALLTDMNQVLASCAGNAVEVKEAVDFMTGAYRNPRLYEVTMGLCAEMLVLGGIASNEAEARVKLNAVLDNGKAAEIFGRMVSGLGGPADFVENYSKYLPDSQIIRPVYADRAGFASAMDTRELGLAVVTLGGGRRKPGDVLDYSVGLSKVCALGDEINADKPIAFIHAQSEGAFAEAEAAVKKAIHIGDTKPDKTPEIYRYIRESDL.

It belongs to the thymidine/pyrimidine-nucleoside phosphorylase family. As to quaternary structure, homodimer.

It catalyses the reaction thymidine + phosphate = 2-deoxy-alpha-D-ribose 1-phosphate + thymine. The protein operates within pyrimidine metabolism; dTMP biosynthesis via salvage pathway; dTMP from thymine: step 1/2. Its function is as follows. The enzymes which catalyze the reversible phosphorolysis of pyrimidine nucleosides are involved in the degradation of these compounds and in their utilization as carbon and energy sources, or in the rescue of pyrimidine bases for nucleotide synthesis. In Shewanella halifaxensis (strain HAW-EB4), this protein is Thymidine phosphorylase.